The following is a 447-amino-acid chain: Trigger factor (447 aa).

One can recognise a PPIase FKBP-type domain in the interval 159-244 (GDMLLMQVES…VREIKEEKLP (86 aa)).

It belongs to the FKBP-type PPIase family. Tig subfamily.

It is found in the cytoplasm. The catalysed reaction is [protein]-peptidylproline (omega=180) = [protein]-peptidylproline (omega=0). Its function is as follows. Involved in protein export. Acts as a chaperone by maintaining the newly synthesized protein in an open conformation. Functions as a peptidyl-prolyl cis-trans isomerase. The protein is Trigger factor of Dehalococcoides mccartyi (strain ATCC BAA-2100 / JCM 16839 / KCTC 5957 / BAV1).